Consider the following 852-residue polypeptide: MIQQPTTAKPRISTSSKLNTVLSKNKENVPGKLFKKFKCPSLVISEKRKELPLRKKPRVNYSEYGSVDGKYDSAYVSENVSGLATIKEANRLILNHERRDPSTVIKKQFSVPKPIKGHEDISKLCAHRPPPTLGMKRKVDFIPRPLYDPADEFAIVLYDPTTDADEIIPDIKEVLAEKRKKDELLKNRKGKKEISDSEPESDHDSCVSTDTVASCSTEQSLITSNTSKHRRPNKSLKDLLGIQKEKPPPPPVAVVIDPKLARILRPHQIEGVKFLYKCVTGRIDRCANGCIMADEMGLGKTLQCIALLWTLLKQSPQAGKPTIEKAIITCPSSLVKNWANELVKWLGKDAITPFILDGKSSKQELIMALQQWASVHGRQVTRPVLIASYETLRSYVEHLNNAEIGMLLCDEGHRLKNSDSLTFTALDKLNVQRRVILSGTPIQNDLSEYFSLLNFANPGLLGSRQEFRKNYEIPILKGRDADGTEKDKENGDAKLAELAKIVNRFIIRRTNDILSKYLPVKYEHVVFCNLSEFQLSLYKHFITSPEINKILRGTGSQPLKAIGLLKKICNHPDLLNLTEDLEGCEALFPPGFIPRELRGRDRNIDSSLSGKMLVLERMLYQIKQETDDKIVLISNYTSTLDLFEQLCRARGYKALRLDGTMNVNKRQRLVDTFNDPEKDAFVFLLSSKAGGCGINLIGANRLILFDPDWNPAADQQALARVWRDGQKKDCFVYRFIATGTIEEKIFQRQSHKQSLSSCVVDEAQDVERHFSLDNLRQLFQLNDHTVCETHETYKCKRCRDGKQFIRAPAMLYGDTSTWNHFTNPTLDRIEDHLLKREAGKQQVSTVFQYKSH.

Short sequence motifs (nuclear localization signal) lie at residues 35-51 (KKFK…RKEL) and 178-181 (KRKK). Basic and acidic residues predominate over residues 187–205 (NRKGKKEISDSEPESDHDS). Residues 187 to 208 (NRKGKKEISDSEPESDHDSCVS) form a disordered region. In terms of domain architecture, Helicase ATP-binding spans 281 to 459 (GRIDRCANGC…FSLLNFANPG (179 aa)). 294–301 (DEMGLGKT) contacts ATP. The short motif at 410–413 (DEGH) is the DEGH box element. Positions 614 to 767 (VLERMLYQIK…CVVDEAQDVE (154 aa)) constitute a Helicase C-terminal domain.

The protein belongs to the SNF2/RAD54 helicase family. In terms of assembly, homohexamer. Interacts with rhp51.

The protein localises to the nucleus. It carries out the reaction ATP + H2O = ADP + phosphate + H(+). Its function is as follows. Plays an essential role in homologous recombination (HR) which is a major pathway for repairing DNA double-strand breaks (DSBs), single-stranded DNA (ssDNA) gaps, and stalled or collapsed replication forks. Acts as a molecular motor during the homology search and guides RAD51 ssDNA along a donor dsDNA thereby changing the homology search from the diffusion-based mechanism to a motor-guided mechanism. Plays also an essential role in RAD51-mediated synaptic complex formation which consists of three strands encased in a protein filament formed once homology is recognized. Once DNA strand exchange occured, dissociates RAD51 from nucleoprotein filaments formed on dsDNA. The chain is DNA repair protein rhp54 (rhp54) from Schizosaccharomyces pombe (strain 972 / ATCC 24843) (Fission yeast).